A 277-amino-acid chain; its full sequence is Large ribosomal subunit protein uL2 (277 aa).

2 disordered regions span residues Lys-37–His-60 and Val-223–Thr-264. The segment covering Ser-39–Ile-49 has biased composition (polar residues). Residues Thr-50–His-60 are compositionally biased toward basic residues. Positions Asp-229–Glu-244 are enriched in basic and acidic residues.

The protein belongs to the universal ribosomal protein uL2 family. In terms of assembly, part of the 50S ribosomal subunit. Forms a bridge to the 30S subunit in the 70S ribosome.

Its function is as follows. One of the primary rRNA binding proteins. Required for association of the 30S and 50S subunits to form the 70S ribosome, for tRNA binding and peptide bond formation. It has been suggested to have peptidyltransferase activity; this is somewhat controversial. Makes several contacts with the 16S rRNA in the 70S ribosome. This is Large ribosomal subunit protein uL2 from Neisseria gonorrhoeae (strain ATCC 700825 / FA 1090).